Consider the following 44-residue polypeptide: Photosystem I reaction center subunit IX (44 aa).

A helical transmembrane segment spans residues 7-27 (YLSVAPVASTLWFVALAGLLI).

This sequence belongs to the PsaJ family.

It localises to the plastid. The protein localises to the chloroplast thylakoid membrane. In terms of biological role, may help in the organization of the PsaE and PsaF subunits. The polypeptide is Photosystem I reaction center subunit IX (Cicer arietinum (Chickpea)).